The sequence spans 738 residues: Glycogen [starch] synthase, muscle (738 aa).

S8 carries the phosphoserine; by AMPK and PKA modification. S11 carries the phosphoserine modification. K39 provides a ligand contact to UDP. The UDP-alpha-D-glucose site is built by H205 and R211. Residues H291, E292, Q294, H297, and K301 each coordinate alpha-D-glucose 6-phosphate. R331 lines the UDP pocket. Residue R331 coordinates UDP-alpha-D-glucose. The residue at position 412 (S412) is a Phosphoserine. Position 501 (H501) interacts with alpha-D-glucose 6-phosphate. UDP-alpha-D-glucose-binding residues include E510, W512, and G513. T515 serves as a coordination point for UDP. Alpha-D-glucose 6-phosphate is bound by residues R582 and R586. A disordered region spans residues 632–738; that stretch reads QGYRYPRPAS…PTSSLGEERN (107 aa). Phosphoserine is present on residues S641 and S645. S649 carries the phosphoserine; by GSK3-alpha and GSK3-beta modification. Residues S652, S653, S657, and S672 each carry the phosphoserine modification. Residues 682 to 695 are compositionally biased toward basic and acidic residues; that stretch reads AKDRRNIRAPEWPR. A phosphoserine mark is found at S698, S709, and S711. A compositionally biased stretch (low complexity) spans 698–738; the sequence is SCSSSTGGSKRSNSVDTGPSSSLSTPTEPLSPTSSLGEERN. T722 is subject to Phosphothreonine. A phosphoserine mark is found at S728 and S732.

It belongs to the glycosyltransferase 3 family. As to quaternary structure, part of the GYS1-GYG1 complex, a heterooctamer composed of a tetramer of GYS1 and 2 dimers of GYG1, where each GYS1 protomer binds to one GYG1 subunit (via GYG1 C-terminus); the GYS1 tetramer may dissociate from GYG1 dimers to continue glycogen polymerization on its own. Phosphorylation at Ser-8 by AMPK inactivates the enzyme activity. Primed phosphorylation at Ser-657 (site 5) by CSNK2A1 and CSNK2A2 is required for inhibitory phosphorylation at Ser-641 (site 3a), Ser-645 (site 3b), Ser-649 (site 3c) and Ser-653 (site 4) by GSK3A an GSK3B. Phosphorylated at Ser-641 by PASK, leading to inactivation; phosphorylation by PASK is inhibited by glycogen. Phosphorylated at Ser-641 by DYRK2, leading to inactivation. Dephosphorylation at Ser-641 and Ser-645 by PP1 activates the enzyme.

It carries out the reaction [(1-&gt;4)-alpha-D-glucosyl](n) + UDP-alpha-D-glucose = [(1-&gt;4)-alpha-D-glucosyl](n+1) + UDP + H(+). The protein operates within glycan biosynthesis; glycogen biosynthesis. With respect to regulation, allosteric activation by glucose-6-phosphate. Phosphorylation reduces the activity towards UDP-glucose. When in the non-phosphorylated state, glycogen synthase does not require glucose-6-phosphate as an allosteric activator; when phosphorylated it does. Its function is as follows. Glycogen synthase participates in the glycogen biosynthetic process along with glycogenin and glycogen branching enzyme. Extends the primer composed of a few glucose units formed by glycogenin by adding new glucose units to it. In this context, glycogen synthase transfers the glycosyl residue from UDP-Glc to the non-reducing end of alpha-1,4-glucan. This is Glycogen [starch] synthase, muscle (Gys1) from Rattus norvegicus (Rat).